A 178-amino-acid chain; its full sequence is Bryoporin (178 aa).

Phosphocholine contacts are provided by Ser51, Val83, Ser102, Pro104, and Tyr134. The segment at 101–117 is trp-rich region; sequence WSVPFDYNLYSNWWNIA.

This sequence belongs to the actinoporin family. Plant subfamily.

Its activity is regulated as follows. Inhibited by sphingomyelin. Actinoporin-related protein having hemolytic activity in vitro. Binds probably a phosphocholine derivative with the unique amido or hydroxyl groups found in sphingomyelin. Involved in drought tolerance. The sequence is that of Bryoporin from Physcomitrium patens (Spreading-leaved earth moss).